Here is a 70-residue protein sequence, read N- to C-terminus: DNA-directed RNA polymerase subunit omega (70 aa).

Belongs to the RNA polymerase subunit omega family. In terms of assembly, the RNAP catalytic core consists of 2 alpha, 1 beta, 1 beta' and 1 omega subunit. When a sigma factor is associated with the core the holoenzyme is formed, which can initiate transcription.

The catalysed reaction is RNA(n) + a ribonucleoside 5'-triphosphate = RNA(n+1) + diphosphate. Functionally, promotes RNA polymerase assembly. Latches the N- and C-terminal regions of the beta' subunit thereby facilitating its interaction with the beta and alpha subunits. The protein is DNA-directed RNA polymerase subunit omega of Bacillus cereus (strain B4264).